The sequence spans 141 residues: Nucleoside diphosphate kinase (141 aa).

Residues K11, F59, R87, T93, R104, and N114 each coordinate ATP. Catalysis depends on H117, which acts as the Pros-phosphohistidine intermediate.

This sequence belongs to the NDK family. As to quaternary structure, homotetramer. It depends on Mg(2+) as a cofactor.

Its subcellular location is the cytoplasm. The catalysed reaction is a 2'-deoxyribonucleoside 5'-diphosphate + ATP = a 2'-deoxyribonucleoside 5'-triphosphate + ADP. It catalyses the reaction a ribonucleoside 5'-diphosphate + ATP = a ribonucleoside 5'-triphosphate + ADP. Functionally, major role in the synthesis of nucleoside triphosphates other than ATP. The ATP gamma phosphate is transferred to the NDP beta phosphate via a ping-pong mechanism, using a phosphorylated active-site intermediate. The sequence is that of Nucleoside diphosphate kinase from Photorhabdus laumondii subsp. laumondii (strain DSM 15139 / CIP 105565 / TT01) (Photorhabdus luminescens subsp. laumondii).